A 192-amino-acid chain; its full sequence is MRIGLLGGSFNPPHQAHRAISLFALKRLQLDRVWWLVTPGNPLKDNGGLHALAERAAAARKVAADPRIEISCLESVIGTRYTADTIDYLRRRASRLRFVWIMGADNLAQFHRWQKWQHIAAQVPMAVVDRPPRSFRALNAPAARALARYRLPEADAGRLADRAAPAWVYLTGLKLSLSSTGLRNPDGSWKSI.

The protein belongs to the NadD family.

It catalyses the reaction nicotinate beta-D-ribonucleotide + ATP + H(+) = deamido-NAD(+) + diphosphate. The protein operates within cofactor biosynthesis; NAD(+) biosynthesis; deamido-NAD(+) from nicotinate D-ribonucleotide: step 1/1. In terms of biological role, catalyzes the reversible adenylation of nicotinate mononucleotide (NaMN) to nicotinic acid adenine dinucleotide (NaAD). This is Probable nicotinate-nucleotide adenylyltransferase from Bradyrhizobium sp. (strain BTAi1 / ATCC BAA-1182).